The sequence spans 137 residues: ATP synthase epsilon chain (137 aa).

Belongs to the ATPase epsilon chain family. F-type ATPases have 2 components, CF(1) - the catalytic core - and CF(0) - the membrane proton channel. CF(1) has five subunits: alpha(3), beta(3), gamma(1), delta(1), epsilon(1). CF(0) has three main subunits: a, b and c.

Its subcellular location is the cellular thylakoid membrane. Its function is as follows. Produces ATP from ADP in the presence of a proton gradient across the membrane. The chain is ATP synthase epsilon chain from Nostoc punctiforme (strain ATCC 29133 / PCC 73102).